Consider the following 878-residue polypeptide: Alanine--tRNA ligase (878 aa).

The Zn(2+) site is built by histidine 562, histidine 566, cysteine 670, and histidine 674.

It belongs to the class-II aminoacyl-tRNA synthetase family. Requires Zn(2+) as cofactor.

The protein resides in the cytoplasm. The enzyme catalyses tRNA(Ala) + L-alanine + ATP = L-alanyl-tRNA(Ala) + AMP + diphosphate. Functionally, catalyzes the attachment of alanine to tRNA(Ala) in a two-step reaction: alanine is first activated by ATP to form Ala-AMP and then transferred to the acceptor end of tRNA(Ala). Also edits incorrectly charged Ser-tRNA(Ala) and Gly-tRNA(Ala) via its editing domain. The polypeptide is Alanine--tRNA ligase (Acinetobacter baumannii (strain ACICU)).